The following is a 162-amino-acid chain: NADH-quinone oxidoreductase subunit I (162 aa).

4Fe-4S ferredoxin-type domains follow at residues R54–E83 and T93–I122. Residues C63, C66, C69, C73, C102, C105, C108, and C112 each coordinate [4Fe-4S] cluster.

Belongs to the complex I 23 kDa subunit family. NDH-1 is composed of 14 different subunits. Subunits NuoA, H, J, K, L, M, N constitute the membrane sector of the complex. It depends on [4Fe-4S] cluster as a cofactor.

It localises to the cell inner membrane. The catalysed reaction is a quinone + NADH + 5 H(+)(in) = a quinol + NAD(+) + 4 H(+)(out). NDH-1 shuttles electrons from NADH, via FMN and iron-sulfur (Fe-S) centers, to quinones in the respiratory chain. The immediate electron acceptor for the enzyme in this species is believed to be ubiquinone. Couples the redox reaction to proton translocation (for every two electrons transferred, four hydrogen ions are translocated across the cytoplasmic membrane), and thus conserves the redox energy in a proton gradient. The polypeptide is NADH-quinone oxidoreductase subunit I (Burkholderia thailandensis (strain ATCC 700388 / DSM 13276 / CCUG 48851 / CIP 106301 / E264)).